Here is a 108-residue protein sequence, read N- to C-terminus: MSLSSTAEIKDIGYFALVPYMQSYLTTKDCVIVRVHYFASFQSSCQRAEPLGSTELINIGDILQATRSSPHRVAVVLPPLEGAPFGSLRFSSRRAPIAPSGKYYFPFG.

This is an uncharacterized protein from Saccharomyces cerevisiae (strain ATCC 204508 / S288c) (Baker's yeast).